Here is a 455-residue protein sequence, read N- to C-terminus: tRNA-2-methylthio-N(6)-dimethylallyladenosine synthase (455 aa).

The 119-residue stretch at 18–136 folds into the MTTase N-terminal domain; that stretch reads KLFFIQTYGC…FPEYLNRVKT (119 aa). Cysteine 27, cysteine 63, cysteine 97, cysteine 173, cysteine 177, and cysteine 180 together coordinate [4Fe-4S] cluster. The Radical SAM core domain maps to 159 to 389; the sequence is RKSDIKGFVT…VEIVNTGIAK (231 aa). Positions 392–455 constitute a TRAM domain; sequence KDAEGKIYEV…SFSLIGEVEK (64 aa).

The protein belongs to the methylthiotransferase family. MiaB subfamily. As to quaternary structure, monomer. [4Fe-4S] cluster serves as cofactor.

The protein resides in the cytoplasm. The catalysed reaction is N(6)-dimethylallyladenosine(37) in tRNA + (sulfur carrier)-SH + AH2 + 2 S-adenosyl-L-methionine = 2-methylsulfanyl-N(6)-dimethylallyladenosine(37) in tRNA + (sulfur carrier)-H + 5'-deoxyadenosine + L-methionine + A + S-adenosyl-L-homocysteine + 2 H(+). Catalyzes the methylthiolation of N6-(dimethylallyl)adenosine (i(6)A), leading to the formation of 2-methylthio-N6-(dimethylallyl)adenosine (ms(2)i(6)A) at position 37 in tRNAs that read codons beginning with uridine. This chain is tRNA-2-methylthio-N(6)-dimethylallyladenosine synthase, found in Clostridium beijerinckii (strain ATCC 51743 / NCIMB 8052) (Clostridium acetobutylicum).